The primary structure comprises 866 residues: DNA mismatch repair protein MutS (866 aa).

An ATP-binding site is contributed by 613 to 620 (GPNMGGKS).

It belongs to the DNA mismatch repair MutS family.

Functionally, this protein is involved in the repair of mismatches in DNA. It is possible that it carries out the mismatch recognition step. This protein has a weak ATPase activity. This chain is DNA mismatch repair protein MutS, found in Haemophilus ducreyi (strain 35000HP / ATCC 700724).